The following is a 159-amino-acid chain: Insulin-like peptide 7 (159 aa).

Positions 1–31 are cleaved as a signal peptide; sequence MTRMIIQNSGSWTLCGAVLLFVLPLIPTPEA. 3 disulfides stabilise this stretch: Cys-63–Cys-136, Cys-75–Cys-150, and Cys-135–Cys-141. A propeptide spans 90-121 (connecting peptide); that stretch reads TGNDEAWIKKTTTEPDGSTWLHVNYANMFLRS.

Belongs to the insulin family. In terms of assembly, heterodimer of a B chain and an A chain linked by two disulfide bonds. Broadly expressed at a low level throughout the embryo, except the yolk. Expressed at a moderate level in the embryonic midgut. Larval expression is restricted to ten cells of the ventral nerve cord - in four pairs of centrally located cells in the most posterior abdominal segments and in one pair of dorsally located cells in the A1 or A2 segments.

The protein resides in the secreted. In terms of biological role, possible ligand of InR/insulin-like receptor. The sequence is that of Insulin-like peptide 7 from Drosophila melanogaster (Fruit fly).